The sequence spans 71 residues: Sec-independent protein translocase protein TatA (71 aa).

A helical membrane pass occupies residues Met1–Gly21. Residues Ala48 to Ser71 are disordered.

The protein belongs to the TatA/E family. As to quaternary structure, the Tat system comprises two distinct complexes: a TatABC complex, containing multiple copies of TatA, TatB and TatC subunits, and a separate TatA complex, containing only TatA subunits. Substrates initially bind to the TatABC complex, which probably triggers association of the separate TatA complex to form the active translocon.

It is found in the cell inner membrane. In terms of biological role, part of the twin-arginine translocation (Tat) system that transports large folded proteins containing a characteristic twin-arginine motif in their signal peptide across membranes. TatA could form the protein-conducting channel of the Tat system. In Bordetella avium (strain 197N), this protein is Sec-independent protein translocase protein TatA.